The chain runs to 1888 residues: E3 ubiquitin-protein ligase UBR3 (1888 aa).

The interval 1–24 (MAAAAAAAVGGQQPSQPELPAPGL) is disordered. The segment at 118 to 189 (ALCGLVWTAN…ESGFCKRHQI (72 aa)) adopts a UBR-type zinc-finger fold. The disordered stretch occupies residues 339–362 (GQVDSSDEDDQDGSQGLGKRKRVK). Ser343 and Ser344 each carry phosphoserine. 2 helical membrane-spanning segments follow: residues 761–781 (MLEG…HLGM) and 919–939 (LLHC…ILMD). Disordered regions lie at residues 1008 to 1028 (APEV…GSLQ) and 1164 to 1186 (VPPK…RQKA). The segment covering 1016–1028 (PASTSSDNLGSLQ) has biased composition (polar residues). Positions 1168-1199 (KVTAAEKKTLDKEERRQKARERQQKLLAEFAS) form a coiled coil. A compositionally biased stretch (basic and acidic residues) spans 1170 to 1186 (TAAEKKTLDKEERRQKA). Residue Ser1199 is modified to Phosphoserine. An RING-type; degenerate zinc finger spans residues 1306–1364 (DSSCLLAVSIGWEGGVYVQTCGHTLHIDCHKSYMESLRNDQVLQGFSVDKGEFTCPLCR). The chain crosses the membrane as a helical span at residues 1806-1826 (QNCGAGTGIFLLINASVIIII).

The protein belongs to the E3 ubiquitin-protein ligase UBR1-like family. Interacts with UBE2A and UBE2B.

It localises to the membrane. The catalysed reaction is S-ubiquitinyl-[E2 ubiquitin-conjugating enzyme]-L-cysteine + [acceptor protein]-L-lysine = [E2 ubiquitin-conjugating enzyme]-L-cysteine + N(6)-ubiquitinyl-[acceptor protein]-L-lysine.. It participates in protein modification; protein ubiquitination. Functionally, E3 ubiquitin-protein ligase which is a component of the N-end rule pathway. Does not bind to proteins bearing specific N-terminal residues that are destabilizing according to the N-end rule, leading to their ubiquitination and subsequent degradation. May play a role in Shh signaling by mediating the ubiquitination of Kif7. May be important for MYH9 function in certain tissues, possibly by regulating the ubiquitination of MYH9 and consequently affecting its interaction with MYO7A. This Homo sapiens (Human) protein is E3 ubiquitin-protein ligase UBR3 (UBR3).